We begin with the raw amino-acid sequence, 250 residues long: MAKNYPVVSAEYQEAVEKARQKLRALIAEKSCAPLMLRLAWHSAGTFDVSSKTGGPFGTMKTPAELSHAANAGLDIAVRMLEPIKEEIPTISYADFYQLAGVVAVEVSGGPAVPFHPGREDKPAPPPEGRLPDATKGSDHLRQVFGAQMGLSDQDIVALSGGHTLGRCHKERSGFEGPWTRNPLQFDNSYFTELLSGDKEGLLQLPSDKALLSDPAFRPLVEKYAADEKAFFEDYKEAHLKLSELGFADA.

His-42 functions as the Proton acceptor in the catalytic mechanism. Positions 113 to 137 (VPFHPGREDKPAPPPEGRLPDATKG) are disordered. His-163 is a binding site for heme b. Residues Thr-164, Thr-180, Asn-182, and Asp-187 each contribute to the K(+) site.

This sequence belongs to the peroxidase family. Ascorbate peroxidase subfamily. The cofactor is heme b. Expressed in roots, aerial vegetative parts and reproductive organs. Expressed in roots, leaves, stems and flowers.

The protein resides in the cytoplasm. The enzyme catalyses L-ascorbate + H2O2 = L-dehydroascorbate + 2 H2O. Inhibited by p-chloromercuriphenylsulfonic acid (CMPSA). In terms of biological role, plays a key role in hydrogen peroxide removal. The polypeptide is L-ascorbate peroxidase 1, cytosolic (Oryza sativa subsp. japonica (Rice)).